The chain runs to 257 residues: Septu protein PtuB (257 aa).

Residues 49 to 96 (CVYCECRLDEESKYMEVEHFLPKDTYPNLVVNWRNLLPSCKRCNGKKG) form the HNH domain.

In terms of biological role, component of antiviral defense system Septu type I, composed of PtuA and PtuB. Expression of Septu type I in B.subtilis (strain BEST7003) confers resistance to phages SBSphiC and SBSphiJ. May be a nuclease. The sequence is that of Septu protein PtuB from Bacillus thuringiensis.